A 97-amino-acid chain; its full sequence is Protein RnfH (97 aa).

Belongs to the UPF0125 (RnfH) family.

In Paramagnetospirillum magneticum (strain ATCC 700264 / AMB-1) (Magnetospirillum magneticum), this protein is Protein RnfH.